Reading from the N-terminus, the 317-residue chain is HTH-type transcriptional regulator CfxR (317 aa).

The HTH lysR-type domain maps to Leu-8–Thr-65. A DNA-binding region (H-T-H motif) is located at residues Phe-25–Lys-44.

Belongs to the LysR transcriptional regulatory family.

Functionally, trans-acting transcriptional regulator of RuBisCO genes (cfxLS) expression. This Cupriavidus necator (strain ATCC 17699 / DSM 428 / KCTC 22496 / NCIMB 10442 / H16 / Stanier 337) (Ralstonia eutropha) protein is HTH-type transcriptional regulator CfxR (cfxR).